The following is a 332-amino-acid chain: Ribosomal RNA small subunit methyltransferase H (332 aa).

Residues glycine 36–tyrosine 38, aspartate 54, phenylalanine 81, aspartate 102, and glutamine 109 contribute to the S-adenosyl-L-methionine site. The interval proline 295–proline 322 is disordered.

It belongs to the methyltransferase superfamily. RsmH family.

It localises to the cytoplasm. The catalysed reaction is cytidine(1402) in 16S rRNA + S-adenosyl-L-methionine = N(4)-methylcytidine(1402) in 16S rRNA + S-adenosyl-L-homocysteine + H(+). In terms of biological role, specifically methylates the N4 position of cytidine in position 1402 (C1402) of 16S rRNA. The chain is Ribosomal RNA small subunit methyltransferase H from Rhodopseudomonas palustris (strain ATCC BAA-98 / CGA009).